Here is a 224-residue protein sequence, read N- to C-terminus: Flagellar L-ring protein (224 aa).

Residues Met1–Ala15 form the signal peptide. Residue Cys16 is the site of N-palmitoyl cysteine attachment. Residue Cys16 is the site of S-diacylglycerol cysteine attachment.

The protein belongs to the FlgH family. The basal body constitutes a major portion of the flagellar organelle and consists of four rings (L,P,S, and M) mounted on a central rod.

The protein localises to the cell outer membrane. It is found in the bacterial flagellum basal body. Functionally, assembles around the rod to form the L-ring and probably protects the motor/basal body from shearing forces during rotation. The protein is Flagellar L-ring protein of Shewanella sp. (strain MR-4).